A 363-amino-acid chain; its full sequence is Flagellar P-ring protein (363 aa).

Residues 1-20 (MKLKLILAVAMLAFSLPSQA) form the signal peptide.

This sequence belongs to the FlgI family. The basal body constitutes a major portion of the flagellar organelle and consists of four rings (L,P,S, and M) mounted on a central rod.

Its subcellular location is the periplasm. The protein localises to the bacterial flagellum basal body. Assembles around the rod to form the L-ring and probably protects the motor/basal body from shearing forces during rotation. This Shewanella sp. (strain MR-4) protein is Flagellar P-ring protein.